The primary structure comprises 76 residues: DNA-directed RNA polymerase subunit epsilon (76 aa).

The protein belongs to the RNA polymerase subunit epsilon family. In terms of assembly, RNAP is composed of a core of 2 alpha, a beta and a beta' subunit. The core is associated with a delta subunit, and at least one of epsilon or omega. When a sigma factor is associated with the core the holoenzyme is formed, which can initiate transcription.

It carries out the reaction RNA(n) + a ribonucleoside 5'-triphosphate = RNA(n+1) + diphosphate. Its function is as follows. A non-essential component of RNA polymerase (RNAP). The polypeptide is DNA-directed RNA polymerase subunit epsilon (Streptococcus gordonii (strain Challis / ATCC 35105 / BCRC 15272 / CH1 / DL1 / V288)).